Reading from the N-terminus, the 285-residue chain is Nucleotide-binding protein FMG_1084 (285 aa).

8 to 15 (GMSGAGKS) provides a ligand contact to ATP. 59–62 (DIRG) serves as a coordination point for GTP.

The protein belongs to the RapZ-like family.

Functionally, displays ATPase and GTPase activities. In Finegoldia magna (strain ATCC 29328 / DSM 20472 / WAL 2508) (Peptostreptococcus magnus), this protein is Nucleotide-binding protein FMG_1084.